Reading from the N-terminus, the 101-residue chain is RNA-binding protein Hfq (101 aa).

The Sm domain occupies 9-68; the sequence is DPFLNALRRERVPVSIYLVNGIKLQGQVESFDQFVILLKNTVSQMVYKHAISTVVPSPPV. Positions 62-101 are disordered; that stretch reads VVPSPPVSHHSNTPSGSTNNYHGSNPSAPQQPQQDSDDAE. Polar residues predominate over residues 70–86; the sequence is HHSNTPSGSTNNYHGSN.

Belongs to the Hfq family. As to quaternary structure, homohexamer.

Its function is as follows. RNA chaperone that binds small regulatory RNA (sRNAs) and mRNAs to facilitate mRNA translational regulation in response to envelope stress, environmental stress and changes in metabolite concentrations. Also binds with high specificity to tRNAs. This is RNA-binding protein Hfq from Yersinia pestis (strain Pestoides F).